Consider the following 346-residue polypeptide: Small ribosomal subunit biogenesis GTPase RsgA (346 aa).

The tract at residues 1 to 26 is disordered; that stretch reads MAKRKLTQNQTRRIQSNNAKTLHRHK. Residues 7–20 show a composition bias toward polar residues; it reads TQNQTRRIQSNNAK. The region spanning 103-271 is the CP-type G domain; it reads ENEISRPDYY…LIDSPGIREF (169 aa). Residues 159-162 and 213-221 contribute to the GTP site; these read NKVD and GQSGVGKSS. C295, C300, H302, and C308 together coordinate Zn(2+).

This sequence belongs to the TRAFAC class YlqF/YawG GTPase family. RsgA subfamily. In terms of assembly, monomer. Associates with 30S ribosomal subunit, binds 16S rRNA. It depends on Zn(2+) as a cofactor.

Its subcellular location is the cytoplasm. Its function is as follows. One of several proteins that assist in the late maturation steps of the functional core of the 30S ribosomal subunit. Helps release RbfA from mature subunits. May play a role in the assembly of ribosomal proteins into the subunit. Circularly permuted GTPase that catalyzes slow GTP hydrolysis, GTPase activity is stimulated by the 30S ribosomal subunit. In Haemophilus influenzae (strain PittEE), this protein is Small ribosomal subunit biogenesis GTPase RsgA.